The primary structure comprises 164 residues: Telomerase-associated protein of 19 kDa (164 aa).

Component of the telomerase holoenzyme complex, composed of the catalytic core (the catalytic subunit TERT, the telomerase RNA template component TER and TAP65/p65), which is associated with two heterotrimeric subcomplexes: (i) the replication protein A (RPA)-related subcomplex, composed of TEB1, RPA2/TEB2 and RPA3/TEB3 and (ii) the CST-like subcomplex, composed of TAP75/p75, TAP45/p45 and TAP19/p19. TEB1 and the CST-like subcomplex are tethered to the catalytic core by TAP50/p50.

It localises to the chromosome. Its subcellular location is the telomere. Component of a CST-like subcomplex of the holoenzyme telomerase ribonucleoprotein complex, which stimulates telomerase complementary-strand synthesis. Telomerase is an essential ribonucleoprotein enzyme that copies new telomeric repeats onto chromosome ends by repetitively synthesizing the short telomere-repeat sequence 5'-TTGGGG-3' using an RNA template component TER. The CST-like subcomplex (also named 7-4-1) binds telomeric single-stranded DNA and coordinates telomere G-strand and C-strand synthesis. The sequence is that of Telomerase-associated protein of 19 kDa from Tetrahymena thermophila (strain SB210).